Reading from the N-terminus, the 557-residue chain is 2-succinyl-5-enolpyruvyl-6-hydroxy-3-cyclohexene-1-carboxylate synthase (557 aa).

Belongs to the TPP enzyme family. MenD subfamily. As to quaternary structure, homodimer. The cofactor is Mg(2+). Mn(2+) serves as cofactor. It depends on thiamine diphosphate as a cofactor.

It carries out the reaction isochorismate + 2-oxoglutarate + H(+) = 5-enolpyruvoyl-6-hydroxy-2-succinyl-cyclohex-3-ene-1-carboxylate + CO2. It functions in the pathway quinol/quinone metabolism; 1,4-dihydroxy-2-naphthoate biosynthesis; 1,4-dihydroxy-2-naphthoate from chorismate: step 2/7. The protein operates within quinol/quinone metabolism; menaquinone biosynthesis. Its function is as follows. Catalyzes the thiamine diphosphate-dependent decarboxylation of 2-oxoglutarate and the subsequent addition of the resulting succinic semialdehyde-thiamine pyrophosphate anion to isochorismate to yield 2-succinyl-5-enolpyruvyl-6-hydroxy-3-cyclohexene-1-carboxylate (SEPHCHC). In Staphylococcus aureus (strain MRSA252), this protein is 2-succinyl-5-enolpyruvyl-6-hydroxy-3-cyclohexene-1-carboxylate synthase.